The sequence spans 966 residues: Collagen alpha-1(I) chain (966 aa).

Residues 1-966 (SYGYDEKSAG…PGPPGPPGPP (966 aa)) are disordered. Lysine 7 bears the Allysine mark. Serine 8 bears the Phosphoserine mark. A 4-hydroxyproline mark is found at proline 27, proline 30, proline 32, proline 41, proline 44, proline 47, proline 61, proline 76, proline 82, proline 91, and proline 97. Basic and acidic residues predominate over residues 64 to 78 (NGDDGEAGKPGRPGE). A 5-hydroxylysine; alternate modification is found at lysine 100. Residue lysine 100 is glycosylated (O-linked (Gal...) hydroxylysine; alternate). Serine 106 is subject to Phosphoserine. The segment covering 114 to 130 (DAGPAGPKGEPGSPGEN) has biased composition (low complexity). Residues proline 124, proline 127, proline 133, proline 142, proline 148, proline 169, proline 178, proline 181, proline 208, proline 211, proline 223, proline 229, proline 238, proline 244, proline 247, and proline 262 each carry the 4-hydroxyproline modification. The segment covering 148-166 (PGASGPAGARGNDGATGAA) has biased composition (low complexity). Positions 168–180 (PPGPTGPAGPPGF) are enriched in pro residues. Over residues 214–253 (AGAAGPAGNPGADGQPGAKGANGAPGIAGAPGFPGARGPS) the composition is skewed to low complexity. At lysine 265 the chain carries 5-hydroxylysine. Residues proline 271, proline 274, proline 286, proline 295, proline 310, proline 316, proline 325, and proline 331 each carry the 4-hydroxyproline modification. A compositionally biased stretch (gly residues) spans 320–329 (GERGGPGSRG). Lysine 340 is subject to 5-hydroxylysine. 4-hydroxyproline is present on residues proline 349, proline 358, proline 364, proline 370, proline 379, proline 382, proline 391, proline 400, proline 406, proline 418, proline 427, proline 436, proline 439, proline 457, proline 475, proline 481, proline 487, proline 493, proline 499, proline 505, proline 517, proline 526, proline 538, proline 542, proline 548, proline 554, and proline 563. Residues 373–399 (KGLTGSPGSPGPDGKTGPPGPAGQDGR) are compositionally biased toward low complexity. A compositionally biased stretch (low complexity) spans 408 to 427 (ARGQAGVMGFPGPKGAAGEP). Over residues 469–496 (QGPAGSPGFQGLPGPAGPPGEAGKPGEQ) the composition is skewed to low complexity. 5-hydroxylysine is present on lysine 575. Residues proline 581, proline 596, and proline 602 each carry the 4-hydroxyproline modification. A compositionally biased stretch (low complexity) spans 608-622 (SGPSGPAGPTGARGA). Position 611 is a phosphoserine (serine 611). Residues proline 623, proline 629, proline 632, proline 641, proline 647, proline 665, proline 674, and proline 683 each carry the 4-hydroxyproline modification. A compositionally biased stretch (low complexity) spans 635–662 (AGFAGPPGADGQPGAKGEPGDAGAKGDA). Residues 664-676 (PPGPAGPTGPPGP) show a composition bias toward pro residues. Position 686 is a 5-hydroxylysine (lysine 686). Low complexity predominate over residues 691–707 (SAGPPGATGFPGAAGRV). 4-hydroxyproline is present on residues proline 695 and proline 701. A 3-hydroxyproline modification is found at proline 709. 14 positions are modified to 4-hydroxyproline: proline 710, proline 719, proline 722, proline 746, proline 755, proline 773, proline 782, proline 785, proline 791, proline 806, proline 812, proline 818, proline 826, and proline 832. Low complexity predominate over residues 736 to 755 (ETGPAGEKGSPGADGPAGAP). Pro residues predominate over residues 805-815 (PPGPVGPPGLA). Positions 824–835 (EGPGAEGSPGRG) are enriched in gly residues. Residues 852–866 (AGPAGARGPAGPQGP) are compositionally biased toward low complexity. A compositionally biased stretch (basic and acidic residues) spans 867 to 881 (RGDKGETGEQGDRGI). Lysine 870 is subject to 5-hydroxylysine. Lysine 882 is modified (5-hydroxylysine; alternate). The O-linked (Gal...) hydroxylysine; alternate glycan is linked to lysine 882. A 4-hydroxyproline mark is found at proline 897, proline 900, proline 918, and proline 933. The span at 900–933 (PGEQGPSGASGPAGPRGPPGSAGSPGKDGLNGLP) shows a compositional bias: low complexity. The residue at position 938 (proline 938) is a 3-hydroxyproline. The residue at position 939 (proline 939) is a 4-hydroxyproline. Positions 951-966 (VGPPGPPGPPGPPGPP) are enriched in pro residues. At proline 953 the chain carries 3-hydroxyproline. Residue proline 954 is modified to 4-hydroxyproline. The residue at position 956 (proline 956) is a 3-hydroxyproline. Proline 957 bears the 4-hydroxyproline mark. At proline 959 the chain carries 3-hydroxyproline. 4-hydroxyproline is present on residues proline 960, proline 963, and proline 966.

Belongs to the fibrillar collagen family. In terms of assembly, trimers of one alpha 2(I) and two alpha 1(I) chains. Post-translationally, contains mostly 4-hydroxyproline. Proline residues at the third position of the tripeptide repeating unit (G-X-Y) are hydroxylated in some or all of the chains. Contains 3-hydroxyproline at a few sites. This modification occurs on the first proline residue in the sequence motif Gly-Pro-Hyp, where Hyp is 4-hydroxyproline. In terms of processing, lysine residues at the third position of the tripeptide repeating unit (G-X-Y) are 5-hydroxylated in some or all of the chains. Post-translationally, O-glycosylated on hydroxylated lysine residues. The O-linked glycan consists of a Glc-Gal disaccharide. As to expression, expressed in bones.

It is found in the secreted. It localises to the extracellular space. The protein localises to the extracellular matrix. Its function is as follows. Type I collagen is a member of group I collagen (fibrillar forming collagen). The sequence is that of Collagen alpha-1(I) chain from Bradypus variegatus (Brown-throated three-fingered sloth).